Consider the following 375-residue polypeptide: Alcohol dehydrogenase 1 (375 aa).

S2 is modified (N-acetylserine). The Zn(2+) site is built by C47, H68, C98, C101, C104, C112, and C175. Residues 200 to 205, D224, and K229 each bind NAD(+); that span reads GLGGVG. Residue K234 is modified to N6-succinyllysine. 293–295 provides a ligand contact to NAD(+); the sequence is VGV. K340 bears the N6-succinyllysine mark. R370 provides a ligand contact to NAD(+).

The protein belongs to the zinc-containing alcohol dehydrogenase family. Class-I subfamily. It depends on Zn(2+) as a cofactor.

The protein resides in the cytoplasm. It carries out the reaction a primary alcohol + NAD(+) = an aldehyde + NADH + H(+). It catalyses the reaction a secondary alcohol + NAD(+) = a ketone + NADH + H(+). This chain is Alcohol dehydrogenase 1 (ADH1), found in Peromyscus maniculatus (North American deer mouse).